The following is a 295-amino-acid chain: Manganese transport system membrane protein MntD (295 aa).

The next 9 helical transmembrane spans lie at 7 to 27 (IIAT…FLVL), 42 to 62 (LLGI…YMFI), 63 to 83 (GAAA…SKGV), 87 to 107 (AAIG…LSVY), 138 to 158 (IGPK…VLIS), 174 to 194 (ALAL…MLSL), 203 to 223 (VGAV…HLLT), 227 to 247 (LYML…GYFF), and 253 to 273 (VSIS…AFLF).

Belongs to the ABC-3 integral membrane protein family. As to quaternary structure, the complex is probably composed of two ATP-binding proteins (MntB), two transmembrane proteins (MntC and MntD) and a solute-binding protein (MntA).

It localises to the cell membrane. Its function is as follows. Probably part of the ABC transporter complex MntABCD involved in manganese import. Probably responsible for the translocation of the substrate across the membrane. The chain is Manganese transport system membrane protein MntD from Bacillus subtilis (strain 168).